Consider the following 394-residue polypeptide: MGGTAARLGAVILFVVIVGLHGVRGKYALADASLKMADPNRFRGKDLPVLDQLTDPPGVRRVYHIQAGLPDPFQPPSLPITVYYAVLERACRSVLLNAPSEAPQIVRGASEDVRKQPYNLTIAWFRMGGNCAIPITVMEYTECSYNKSLGACPIRTQPRWNYYDSFSAVSEDNLGFLMHAPAFETAGTYLRLVKINDWTEITQFILEHRAKGSCKYALPLRIPPSACLSPQAYQQGVTVDSIGMLPRFIPENQRTVAVYSLKIAGWHGPKAPYTSTLLPPELSETPNATQPELAPEDPEDSALLEDPVGTVAPQIPPNWHIPSIQDAATPYHPPATPNNMGLIAGAVGGSLLAALVICGIVYWMHRRTRKAPKRIRLPHIREDDQPSSHQPLFY.

Positions 1-25 (MGGTAARLGAVILFVVIVGLHGVRG) are cleaved as a signal peptide. Positions 25 to 57 (GKYALADASLKMADPNRFRGKDLPVLDQLTDPP) are interaction with TNFRSF14. Residues 26–339 (KYALADASLK…PYHPPATPNN (314 aa)) are Virion surface-facing. A Zn(2+)-binding site is contributed by His64. 3 cysteine pairs are disulfide-bonded: Cys91–Cys214, Cys131–Cys227, and Cys143–Cys152. Asn119 and Asn146 each carry an N-linked (GlcNAc...) asparagine; by host glycan. Asp240 serves as a coordination point for Zn(2+). The profusion stretch occupies residues 261–305 (LKIAGWHGPKAPYTSTLLPPELSETPNATQPELAPEDPEDSALLE). The tract at residues 275–301 (STLLPPELSETPNATQPELAPEDPEDS) is disordered. N-linked (GlcNAc...) asparagine; by host glycosylation is present at Asn287. The helical transmembrane segment at 340 to 364 (MGLIAGAVGGSLLAALVICGIVYWM) threads the bilayer. Residues 365-394 (HRRTRKAPKRIRLPHIREDDQPSSHQPLFY) are Intravirion-facing.

The protein belongs to the herpesviridae glycoprotein D family. As to quaternary structure, homodimer. Interacts with host receptor TNFRSF14. Interacts with host receptor NECTIN1. Interacts (via profusion domain) with gB; this interaction occurs in the absence of gH/gL. Interacts (via profusion domain) with gH/gL heterodimer; this interaction occurs in the absence of gB. Associates with the gB-gH/gL-gD complex. Interacts (via C-terminus) with UL11 tegument protein. Interacts with host RSAD2.

The protein localises to the virion membrane. It is found in the host Golgi apparatus. Functionally, envelope glycoprotein that binds to the host cell entry receptors NECTIN1, TNFRSF14/HVEM and 3-O-sulfated heparan sulfate, promoting the virus entry into host cells. May trigger fusion with host membrane, by recruiting the fusion machinery composed of gB and gH/gL. This is Envelope glycoprotein D (gD) from Human herpesvirus 1 (strain Patton) (HHV-1).